The primary structure comprises 107 residues: uncharacterized protein (107 aa).

The segment at lysine 86–glycine 107 is disordered.

This is an uncharacterized protein from Saccharomyces cerevisiae (strain ATCC 204508 / S288c) (Baker's yeast).